The sequence spans 175 residues: Peptide deformylase (175 aa).

Cys96 and His138 together coordinate Fe cation. Glu139 is a catalytic residue. Residue His142 participates in Fe cation binding.

Belongs to the polypeptide deformylase family. The cofactor is Fe(2+).

It carries out the reaction N-terminal N-formyl-L-methionyl-[peptide] + H2O = N-terminal L-methionyl-[peptide] + formate. Its function is as follows. Removes the formyl group from the N-terminal Met of newly synthesized proteins. Requires at least a dipeptide for an efficient rate of reaction. N-terminal L-methionine is a prerequisite for activity but the enzyme has broad specificity at other positions. This chain is Peptide deformylase, found in Rhodopseudomonas palustris (strain ATCC BAA-98 / CGA009).